The following is a 227-amino-acid chain: Cytochrome c oxidase subunit 2 (227 aa).

At M1–S14 the chain is on the mitochondrial intermembrane side. A helical transmembrane segment spans residues P15–M45. At L46–Q59 the chain is on the mitochondrial matrix side. The chain crosses the membrane as a helical span at residues E60–M87. At D88–I227 the chain is on the mitochondrial intermembrane side. Residues H161, C196, E198, C200, H204, and M207 each coordinate Cu cation. E198 provides a ligand contact to Mg(2+).

The protein belongs to the cytochrome c oxidase subunit 2 family. In terms of assembly, component of the cytochrome c oxidase (complex IV, CIV), a multisubunit enzyme composed of 14 subunits. The complex is composed of a catalytic core of 3 subunits MT-CO1, MT-CO2 and MT-CO3, encoded in the mitochondrial DNA, and 11 supernumerary subunits COX4I, COX5A, COX5B, COX6A, COX6B, COX6C, COX7A, COX7B, COX7C, COX8 and NDUFA4, which are encoded in the nuclear genome. The complex exists as a monomer or a dimer and forms supercomplexes (SCs) in the inner mitochondrial membrane with NADH-ubiquinone oxidoreductase (complex I, CI) and ubiquinol-cytochrome c oxidoreductase (cytochrome b-c1 complex, complex III, CIII), resulting in different assemblies (supercomplex SCI(1)III(2)IV(1) and megacomplex MCI(2)III(2)IV(2)). Found in a complex with TMEM177, COA6, COX18, COX20, SCO1 and SCO2. Interacts with TMEM177 in a COX20-dependent manner. Interacts with COX20. Interacts with COX16. It depends on Cu cation as a cofactor.

It localises to the mitochondrion inner membrane. It catalyses the reaction 4 Fe(II)-[cytochrome c] + O2 + 8 H(+)(in) = 4 Fe(III)-[cytochrome c] + 2 H2O + 4 H(+)(out). Its function is as follows. Component of the cytochrome c oxidase, the last enzyme in the mitochondrial electron transport chain which drives oxidative phosphorylation. The respiratory chain contains 3 multisubunit complexes succinate dehydrogenase (complex II, CII), ubiquinol-cytochrome c oxidoreductase (cytochrome b-c1 complex, complex III, CIII) and cytochrome c oxidase (complex IV, CIV), that cooperate to transfer electrons derived from NADH and succinate to molecular oxygen, creating an electrochemical gradient over the inner membrane that drives transmembrane transport and the ATP synthase. Cytochrome c oxidase is the component of the respiratory chain that catalyzes the reduction of oxygen to water. Electrons originating from reduced cytochrome c in the intermembrane space (IMS) are transferred via the dinuclear copper A center (CU(A)) of subunit 2 and heme A of subunit 1 to the active site in subunit 1, a binuclear center (BNC) formed by heme A3 and copper B (CU(B)). The BNC reduces molecular oxygen to 2 water molecules using 4 electrons from cytochrome c in the IMS and 4 protons from the mitochondrial matrix. The protein is Cytochrome c oxidase subunit 2 (MT-CO2) of Batomys granti (Luzon hairy-tailed rat).